The primary structure comprises 1370 residues: MPYSYTEKKRIRKSFAKREDVQDVPFLLATQLQSYLTFLQADTPPSDRASEGLQAAFSSIFPIVSHNGMARLEFVSYVLGEPVFDVKECQQRGLTYASPLRAKVRLVLLDREVSKPTIKEVKEQEVYMGEIPLMTGTGSFVINGTERVIVSQLHRSPGVFFEHDRGKTHSSGKLLFSARVIPYRGSWLDFEFDPKDVLFFRVDRRRKMPVTILLKAIGMTPESILAHFFDFDNFELKSEGGMIEFVPERWKGEMARFDITGRDGNVIVEKDKRINAKHLRDMANANIQRVSVPEEFLYGRVLAKNIVDPDTGEVVAHANDEITESVLSALRAANVRDIQTLYTNDLDRGPYISQTLRTDETADQMAARVAIYRMMRPGEPPTEDAVEALFQRLFYSEETYDLSRVGRMKVNSRLGRGEDITGPMTLTNEDILETIKVLVELRNGRGQIDDIDHLGNRRVRCVGELAENQFRAGLVRVERAVKERLGQAETENLMPHDLINSKPISAAIKEFFGSSQLSQFMDQTNPLSEITHKRRVSALGPGGLTRERAGFEVRDVHPTHYGRVCPIETPEGPNIGLINSMALYARLNEYGFLETPYRKIIDGKVSDQIDYLSAIEESNYVIAQANAALDDEGRFVDDLVACREAGETMLTAPANVHYMDVAPSQIVSVAASLIPFLEHDDANRALMGANMQRQAVPCLRPEKPVVGTGVERTVAVDSGTTVQALRGGVVDHVDAERVVIRVNDDENVAGEVGVDIYNLIKYTRSNQNTNINQRPIVKRGDKVAKGDVLADGASTDLGELALGQNMLIAFMPWNGYNFEDSILISEKVVADDRYTSIHIEELTVVARDTKLGPEEITRDISNLAETQLNRLDDSGIVYIGAEVTADDVLVGKVTPKGETQLTPEEKLLRAIFGEKASDVKDTSLRVPSGMVGTVIDVQVFTREGIVRDKRAQSIIDDELRRYRQDLNDQLRIVENDQFDRIEKLLIGKTVNGGPRKLAKGATITKAYLADLDRWQWFDIRLADEPHAVVLEQAKESLEQKRHQFDLAFEEKRKKLTQGDELPPGVLKMIKVYLAVKRRLQPGDKMAGRHGNKGVVSRITPVEDMPHMADGTPADIVLNPLGVPSRMNVGQVLEVHLGWAAKGVGHRIADMLRDERTAQVKNVRAYLDKVYNTTGTGEQIDTLTDDEVMELAQNLKNGVPFATPVFDGATEEEIGKMLELAYPDEVAKRMQLTDSRTQAWLFDGRTGEKFERPVTVGYMHYLKLHHLVDDKMHARSTGPYSLVTQQPLGGKAQFGGQRFGEMEVWALEAYGAAYTLQEMLTVKSDDITGRTKVYENIVKGDHVIDAGMPESFNVLVKEIRSLALDMDLERN.

This sequence belongs to the RNA polymerase beta chain family. As to quaternary structure, the RNAP catalytic core consists of 2 alpha, 1 beta, 1 beta' and 1 omega subunit. When a sigma factor is associated with the core the holoenzyme is formed, which can initiate transcription.

The enzyme catalyses RNA(n) + a ribonucleoside 5'-triphosphate = RNA(n+1) + diphosphate. In terms of biological role, DNA-dependent RNA polymerase catalyzes the transcription of DNA into RNA using the four ribonucleoside triphosphates as substrates. In Bordetella petrii (strain ATCC BAA-461 / DSM 12804 / CCUG 43448), this protein is DNA-directed RNA polymerase subunit beta.